Here is a 358-residue protein sequence, read N- to C-terminus: Histidinol-phosphate aminotransferase (358 aa).

K218 bears the N6-(pyridoxal phosphate)lysine mark.

The protein belongs to the class-II pyridoxal-phosphate-dependent aminotransferase family. Histidinol-phosphate aminotransferase subfamily. Homodimer. Pyridoxal 5'-phosphate serves as cofactor.

It catalyses the reaction L-histidinol phosphate + 2-oxoglutarate = 3-(imidazol-4-yl)-2-oxopropyl phosphate + L-glutamate. It participates in amino-acid biosynthesis; L-histidine biosynthesis; L-histidine from 5-phospho-alpha-D-ribose 1-diphosphate: step 7/9. The protein is Histidinol-phosphate aminotransferase of Dehalococcoides mccartyi (strain ATCC BAA-2266 / KCTC 15142 / 195) (Dehalococcoides ethenogenes (strain 195)).